Here is a 775-residue protein sequence, read N- to C-terminus: Endothelin-converting enzyme-like 1 (775 aa).

The Cytoplasmic portion of the chain corresponds to 1 to 61 (MEAPYSMTAH…LPRWNRREVC (61 aa)). The segment at 23 to 51 (CGTGGARGTSLPPGFPRSSGRSASGARSG) is disordered. The segment covering 32–51 (SLPPGFPRSSGRSASGARSG) has biased composition (low complexity). Residues 62–82 (LLSGLVFAAGLCAILAAMLAL) traverse the membrane as a helical; Signal-anchor for type II membrane protein segment. The Lumenal segment spans residues 83 to 775 (KYLGPGAAGT…MNPVHKCSVW (693 aa)). In terms of domain architecture, Peptidase M13 spans 99-775 (GCPERKAFAR…MNPVHKCSVW (677 aa)). Cystine bridges form between Cys-124/Cys-760, Cys-132/Cys-720, Cys-188/Cys-441, and Cys-649/Cys-772. Asn-255 and Asn-322 each carry an N-linked (GlcNAc...) asparagine glycan. Position 612 (His-612) interacts with Zn(2+). Glu-613 is a catalytic residue. His-616 contacts Zn(2+). An N-linked (GlcNAc...) asparagine glycan is attached at Asn-656. Glu-672 contacts Zn(2+). Residue Asp-676 is the Proton donor of the active site.

This sequence belongs to the peptidase M13 family. Zn(2+) is required as a cofactor. As to expression, highly expressed in the CNS, in particular in neurons of the caudate putamen, diagonal band, the paraventricular nucleus of the thalamus, part of the hypothalamus, in cranial motor nuclei, inferior olive, and substantia gelatinosa of the spinal tract trigeminal nucleus. Not detected in cerebral cortex, hippocampus and cerebellum.

The protein localises to the membrane. In terms of biological role, may contribute to the degradation of peptide hormones and be involved in the inactivation of neuronal peptides. Cleaves the synthetic substrate Z-Gly-Gly-Leu-pNA and releases pNA. May protect against C2-ceramide-induced apoptosis. In Rattus norvegicus (Rat), this protein is Endothelin-converting enzyme-like 1 (Ecel1).